Here is a 674-residue protein sequence, read N- to C-terminus: Translation factor GUF1, mitochondrial (674 aa).

The transit peptide at 1 to 33 (MLRPWFCFRSCVSLLSNRRQYGFRYLATAEPSK) directs the protein to the mitochondrion. A disordered region spans residues 32-51 (SKSEKPAKPVKPAKPMSVQE). The tr-type G domain maps to 75 to 257 (QNYRNFSIVA…SIIKNIPAPV (183 aa)). GTP contacts are provided by residues 84–91 (AHVDHGKS), 150–154 (DTPGH), and 204–207 (NKID).

It belongs to the TRAFAC class translation factor GTPase superfamily. Classic translation factor GTPase family. LepA subfamily.

The protein localises to the mitochondrion inner membrane. It carries out the reaction GTP + H2O = GDP + phosphate + H(+). Promotes mitochondrial protein synthesis. May act as a fidelity factor of the translation reaction, by catalyzing a one-codon backward translocation of tRNAs on improperly translocated ribosomes. Binds to mitochondrial ribosomes in a GTP-dependent manner. The polypeptide is Translation factor GUF1, mitochondrial (Lodderomyces elongisporus (strain ATCC 11503 / CBS 2605 / JCM 1781 / NBRC 1676 / NRRL YB-4239) (Yeast)).